The sequence spans 704 residues: Elongation factor G (704 aa).

Residues 8-290 enclose the tr-type G domain; it reads ARYRNIGISA…AVIDYLPSPV (283 aa). Residues 17–24, 88–92, and 142–145 each bind GTP; these read AHIDAGKT, DTPGH, and NKMD. An N6-acetyllysine mark is found at Lys504 and Lys643.

The protein belongs to the TRAFAC class translation factor GTPase superfamily. Classic translation factor GTPase family. EF-G/EF-2 subfamily.

It is found in the cytoplasm. Catalyzes the GTP-dependent ribosomal translocation step during translation elongation. During this step, the ribosome changes from the pre-translocational (PRE) to the post-translocational (POST) state as the newly formed A-site-bound peptidyl-tRNA and P-site-bound deacylated tRNA move to the P and E sites, respectively. Catalyzes the coordinated movement of the two tRNA molecules, the mRNA and conformational changes in the ribosome. This Shigella sonnei (strain Ss046) protein is Elongation factor G.